The sequence spans 355 residues: Squamosa promoter-binding protein-like 15 (355 aa).

The tract at residues 1–27 is disordered; the sequence is MELLKGSGLNQTESGGSSSTESSSLSG. Positions 12 to 27 are enriched in low complexity; the sequence is TESGGSSSTESSSLSG. The segment at 61–138 adopts an SBP-type zinc-finger fold; sequence TARCQVEGCR…ACHNERRRKP (78 aa). Residues Cys64, Cys69, Cys86, His89, Cys105, Cys108, His112, and Cys124 each coordinate Zn(2+). A Bipartite nuclear localization signal motif is present at residues 121–137; it reads KRSCRRRLACHNERRRK.

It localises to the nucleus. Functionally, probable transcription factor required for the flowering response to vernalization in the shoot apical meristem (SAM). Defines the competence of shoot meristems to flower in response to vernalization in perennials. This Arabis alpina (Alpine rock-cress) protein is Squamosa promoter-binding protein-like 15.